The primary structure comprises 177 residues: Nucleoside triphosphate/diphosphate phosphatase (177 aa).

Arg-23 serves as the catalytic Proton donor. The Mg(2+) site is built by Asn-87, Asp-103, Asp-105, Asp-107, Asp-120, and Glu-123.

Belongs to the Ntdp family. The cofactor is Mg(2+).

It carries out the reaction a ribonucleoside 5'-triphosphate + H2O = a ribonucleoside 5'-diphosphate + phosphate + H(+). It catalyses the reaction a ribonucleoside 5'-diphosphate + H2O = a ribonucleoside 5'-phosphate + phosphate + H(+). Has nucleoside phosphatase activity towards nucleoside triphosphates and nucleoside diphosphates. The protein is Nucleoside triphosphate/diphosphate phosphatase of Streptococcus suis (strain 98HAH33).